Consider the following 177-residue polypeptide: Anti-apoptotic protein NR13 (177 aa).

A BH1 motif is present at residues Leu-75–Gly-94. A helical transmembrane segment spans residues Leu-86–Glu-106. The BH2 motif lies at Glu-126–Phe-141. A helical transmembrane segment spans residues Ser-156–Val-176.

The protein belongs to the Bcl-2 family. In terms of assembly, interacts with BAX. In terms of tissue distribution, mainly expressed in neural and muscular tissues.

Its subcellular location is the cell membrane. Functionally, shows anti-apoptotic properties. Counteract the pro-apoptotic activity of BAX. The chain is Anti-apoptotic protein NR13 (NR13) from Coturnix japonica (Japanese quail).